The chain runs to 83 residues: Cobrotoxin homolog (83 aa).

The N-terminal stretch at 1–21 (METLLLTLLVVTIVCLDLGYT) is a signal peptide. 4 disulfides stabilise this stretch: C24–C45, C38–C62, C64–C75, and C76–C81.

The protein belongs to the three-finger toxin family. Short-chain subfamily. Type I alpha-neurotoxin sub-subfamily. As to expression, expressed by the venom gland.

The protein resides in the secreted. Functionally, binds to muscle nicotinic acetylcholine receptor (nAChR) and inhibit acetylcholine from binding to the receptor, thereby impairing neuromuscular transmission. The protein is Cobrotoxin homolog of Naja naja (Indian cobra).